Reading from the N-terminus, the 436-residue chain is Citrate synthase (436 aa).

Catalysis depends on residues histidine 311 and aspartate 370.

It belongs to the citrate synthase family.

It catalyses the reaction oxaloacetate + acetyl-CoA + H2O = citrate + CoA + H(+). Its pathway is carbohydrate metabolism; tricarboxylic acid cycle; isocitrate from oxaloacetate: step 1/2. This is Citrate synthase (gltA) from Rickettsia typhi (strain ATCC VR-144 / Wilmington).